The sequence spans 72 residues: Brevinin-2GHc (72 aa).

An N-terminal signal peptide occupies residues 1–22; the sequence is MFTMKKSLLLLFFLGMISLSLC. The propeptide occupies 23-42; the sequence is EQERGADEDEGEVEEQIKRS. The cysteines at positions 64 and 70 are disulfide-linked.

As to expression, expressed by the skin glands.

It is found in the secreted. Functionally, antimicrobial peptide. Active against the Gram-positive bacteria S.aureus FDA209P (MIC=9.8 ug/ml) and B.subtilis ATCC 6633 (MIC&gt;64 ug/ml), and the Gram-negative bacteria E.coli O111 (MIC=19.6 ug/ml) and E.coli ATCC 25922 (MIC=9.8 ug/ml). Not active against the fungus C.albicans. The polypeptide is Brevinin-2GHc (Sylvirana guentheri (Gunther's frog)).